The following is a 145-amino-acid chain: Mannitol-specific phosphotransferase enzyme IIA component (145 aa).

A PTS EIIA type-2 domain is found at Thr4 to Val143. His64 serves as the catalytic Tele-phosphohistidine intermediate. A Phosphohistidine; by HPr modification is found at His64.

It is found in the cytoplasm. In terms of biological role, the phosphoenolpyruvate-dependent sugar phosphotransferase system (sugar PTS), a major carbohydrate active transport system, catalyzes the phosphorylation of incoming sugar substrates concomitantly with their translocation across the cell membrane. The enzyme II CmtAB PTS system is involved in D-mannitol transport. This chain is Mannitol-specific phosphotransferase enzyme IIA component (mtlF), found in Halalkalibacterium halodurans (strain ATCC BAA-125 / DSM 18197 / FERM 7344 / JCM 9153 / C-125) (Bacillus halodurans).